The following is a 168-amino-acid chain: Co-chaperone protein HscB homolog (168 aa).

The J domain occupies 5 to 77; sequence DYFSLFGLPS…MLRARYLCES (73 aa).

The protein belongs to the HscB family. In terms of assembly, interacts with HscA and stimulates its ATPase activity.

Its function is as follows. Co-chaperone involved in the maturation of iron-sulfur cluster-containing proteins. Seems to help targeting proteins to be folded toward HscA. The polypeptide is Co-chaperone protein HscB homolog (Bordetella avium (strain 197N)).